The primary structure comprises 131 residues: Small ribosomal subunit protein uS19 (131 aa).

Belongs to the universal ribosomal protein uS19 family.

Functionally, protein S19 forms a complex with S13 that binds strongly to the 16S ribosomal RNA. This is Small ribosomal subunit protein uS19 from Cenarchaeum symbiosum (strain A).